The chain runs to 81 residues: Large ribosomal subunit protein bL31B (81 aa).

It belongs to the bacterial ribosomal protein bL31 family. Type B subfamily. Part of the 50S ribosomal subunit.

The protein is Large ribosomal subunit protein bL31B of Lactobacillus helveticus (strain DPC 4571).